A 766-amino-acid chain; its full sequence is Phosphoribosylformylglycinamidine synthase subunit PurL (766 aa).

The active site involves histidine 49. The ATP site is built by tyrosine 52 and lysine 91. Residue glutamate 93 coordinates Mg(2+). Substrate-binding positions include 94 to 97 and arginine 116; that span reads SHNH. The active-site Proton acceptor is histidine 95. Residue aspartate 117 participates in Mg(2+) binding. Residue glutamine 240 participates in substrate binding. A Mg(2+)-binding site is contributed by aspartate 268. 312–314 contributes to the substrate binding site; that stretch reads ESQ. 2 residues coordinate ATP: aspartate 508 and glycine 545. Asparagine 546 contacts Mg(2+). Serine 548 provides a ligand contact to substrate.

Belongs to the FGAMS family. As to quaternary structure, monomer. Part of the FGAM synthase complex composed of 1 PurL, 1 PurQ and 2 PurS subunits.

It localises to the cytoplasm. It catalyses the reaction N(2)-formyl-N(1)-(5-phospho-beta-D-ribosyl)glycinamide + L-glutamine + ATP + H2O = 2-formamido-N(1)-(5-O-phospho-beta-D-ribosyl)acetamidine + L-glutamate + ADP + phosphate + H(+). Its pathway is purine metabolism; IMP biosynthesis via de novo pathway; 5-amino-1-(5-phospho-D-ribosyl)imidazole from N(2)-formyl-N(1)-(5-phospho-D-ribosyl)glycinamide: step 1/2. Part of the phosphoribosylformylglycinamidine synthase complex involved in the purines biosynthetic pathway. Catalyzes the ATP-dependent conversion of formylglycinamide ribonucleotide (FGAR) and glutamine to yield formylglycinamidine ribonucleotide (FGAM) and glutamate. The FGAM synthase complex is composed of three subunits. PurQ produces an ammonia molecule by converting glutamine to glutamate. PurL transfers the ammonia molecule to FGAR to form FGAM in an ATP-dependent manner. PurS interacts with PurQ and PurL and is thought to assist in the transfer of the ammonia molecule from PurQ to PurL. This chain is Phosphoribosylformylglycinamidine synthase subunit PurL, found in Synechococcus sp. (strain CC9902).